Here is a 314-residue protein sequence, read N- to C-terminus: tRNA pseudouridine synthase B (314 aa).

His43 contacts substrate. Asp48 acts as the Nucleophile in catalysis. The substrate site is built by Tyr76, Tyr179, and Leu200.

This sequence belongs to the pseudouridine synthase TruB family. Type 1 subfamily.

The catalysed reaction is uridine(55) in tRNA = pseudouridine(55) in tRNA. Its function is as follows. Responsible for synthesis of pseudouridine from uracil-55 in the psi GC loop of transfer RNAs. This is tRNA pseudouridine synthase B from Salmonella choleraesuis (strain SC-B67).